We begin with the raw amino-acid sequence, 130 residues long: Small ribosomal subunit protein uS9 (130 aa).

This sequence belongs to the universal ribosomal protein uS9 family.

The polypeptide is Small ribosomal subunit protein uS9 (Variovorax paradoxus (strain S110)).